Reading from the N-terminus, the 530-residue chain is Estrogen receptor beta (530 aa).

The tract at residues 1–148 (MEIKNSPSSL…SPSAKRDAHF (148 aa)) is modulating. At Ser-61 the chain carries Phosphoserine; alternate. O-linked (GlcNAc) serine; alternate glycosylation is present at Ser-61. Phosphoserine; by MAPK is present on residues Ser-87 and Ser-105. 2 NR C4-type zinc fingers span residues 149–169 (CAVCSDYASGYHYGVWSCEGC) and 185–209 (CPATNQCTIDKNRRKSCQACRLRKC). Residues 149-214 (CAVCSDYASG…RLRKCYEVGM (66 aa)) constitute a DNA-binding region (nuclear receptor). One can recognise an NR LBD domain in the interval 264 to 498 (SPEQLVLTLL…DLLLEMLNAH (235 aa)). A compositionally biased stretch (polar residues) spans 506–515 (SISGSECCST). A disordered region spans residues 506 to 530 (SISGSECCSTEDSKSKEGSQNLQSQ).

Belongs to the nuclear hormone receptor family. NR3 subfamily. Binds DNA as a homodimer. Can form a heterodimer with ESR1. Interacts with NCOA1, NCOA3, NCOA5 and NCOA6 coactivators, leading to a strong increase of transcription of target genes. Interacts with UBE1C and AKAP13. Interacts with DNTTIP2. Interacts with CCDC62 in the presence of estradiol/E2; this interaction seems to enhance the transcription of target genes. Interacts with DNAAF4. Interacts with PRMT2. Interacts with CCAR2 (via N-terminus) in a ligand-independent manner. Interacts with RBM39, in the presence of estradiol (E2). Interacts with STUB1/CHIP. Post-translationally, phosphorylation at Ser-87 and Ser-105 recruits NCOA1. In terms of tissue distribution, expressed in prostate, ovary, Leydig cells and in epithelium of the efferent ductules and of the initial segment of the epididymis.

The protein resides in the nucleus. Nuclear hormone receptor. Binds estrogens with an affinity similar to that of ESR1/ER-alpha, and activates expression of reporter genes containing estrogen response elements (ERE) in an estrogen-dependent manner. The sequence is that of Estrogen receptor beta (Esr2) from Mus musculus (Mouse).